The chain runs to 181 residues: uncharacterized protein (181 aa).

This is an uncharacterized protein from Rickettsia prowazekii (strain Madrid E).